A 341-amino-acid polypeptide reads, in one-letter code: Anthranilate phosphoribosyltransferase (341 aa).

5-phospho-alpha-D-ribose 1-diphosphate-binding positions include G79, 82-83 (GD), T87, 89-92 (NIST), 107-115 (KHGNRAVSS), and S119. Residue G79 participates in anthranilate binding. S91 is a binding site for Mg(2+). N110 is a binding site for anthranilate. R165 is an anthranilate binding site. 2 residues coordinate Mg(2+): D224 and E225.

Belongs to the anthranilate phosphoribosyltransferase family. As to quaternary structure, homodimer. Requires Mg(2+) as cofactor.

The enzyme catalyses N-(5-phospho-beta-D-ribosyl)anthranilate + diphosphate = 5-phospho-alpha-D-ribose 1-diphosphate + anthranilate. Its pathway is amino-acid biosynthesis; L-tryptophan biosynthesis; L-tryptophan from chorismate: step 2/5. Functionally, catalyzes the transfer of the phosphoribosyl group of 5-phosphorylribose-1-pyrophosphate (PRPP) to anthranilate to yield N-(5'-phosphoribosyl)-anthranilate (PRA). This Bacillus cereus (strain G9842) protein is Anthranilate phosphoribosyltransferase.